The following is a 286-amino-acid chain: ATP synthase gamma chain (286 aa).

The protein belongs to the ATPase gamma chain family. F-type ATPases have 2 components, CF(1) - the catalytic core - and CF(0) - the membrane proton channel. CF(1) has five subunits: alpha(3), beta(3), gamma(1), delta(1), epsilon(1). CF(0) has three main subunits: a, b and c.

It is found in the cell inner membrane. In terms of biological role, produces ATP from ADP in the presence of a proton gradient across the membrane. The gamma chain is believed to be important in regulating ATPase activity and the flow of protons through the CF(0) complex. The sequence is that of ATP synthase gamma chain from Pseudomonas putida (strain GB-1).